Consider the following 97-residue polypeptide: MNKKFSISLLSTILAFLLVLGCDLSSNNAENKMDDIFNLEKKYMDNSNYKCLSKNEAIVKNSKIKLGVNNTRSRSYSSRETNVSDSYNKTYSYCKSN.

Positions 1–21 are cleaved as a signal peptide; sequence MNKKFSISLLSTILAFLLVLG. C22 carries N-palmitoyl cysteine lipidation. A lipid anchor (S-diacylglycerol cysteine) is attached at C22.

To B.burgdorferi BBD15.

It localises to the cell membrane. This is an uncharacterized protein from Borreliella burgdorferi (strain ATCC 35210 / DSM 4680 / CIP 102532 / B31) (Borrelia burgdorferi).